The sequence spans 86 residues: ATP synthase subunit c (86 aa).

The next 2 membrane-spanning stretches (helical) occupy residues 8–28 (VLGC…GPGI) and 64–84 (TTGL…PLLG).

It belongs to the ATPase C chain family. F-type ATPases have 2 components, F(1) - the catalytic core - and F(0) - the membrane proton channel. F(1) has five subunits: alpha(3), beta(3), gamma(1), delta(1), epsilon(1). F(0) has three main subunits: a(1), b(2) and c(10-14). The alpha and beta chains form an alternating ring which encloses part of the gamma chain. F(1) is attached to F(0) by a central stalk formed by the gamma and epsilon chains, while a peripheral stalk is formed by the delta and b chains.

Its subcellular location is the cell membrane. In terms of biological role, f(1)F(0) ATP synthase produces ATP from ADP in the presence of a proton or sodium gradient. F-type ATPases consist of two structural domains, F(1) containing the extramembraneous catalytic core and F(0) containing the membrane proton channel, linked together by a central stalk and a peripheral stalk. During catalysis, ATP synthesis in the catalytic domain of F(1) is coupled via a rotary mechanism of the central stalk subunits to proton translocation. Key component of the F(0) channel; it plays a direct role in translocation across the membrane. A homomeric c-ring of between 10-14 subunits forms the central stalk rotor element with the F(1) delta and epsilon subunits. The chain is ATP synthase subunit c from Lachnoclostridium phytofermentans (strain ATCC 700394 / DSM 18823 / ISDg) (Clostridium phytofermentans).